Here is a 747-residue protein sequence, read N- to C-terminus: MEIPNPPTSKCITYWKRKVKSEYMRLRQLKRLQANMGAKALYVANFAKVQEKTQILNEEWKKLRVQPVQSMKPVCGHPFLKKCTIESIFPGFASQHMLMRSLNTVALVPIMYSWSPLQQNFMVEDETVLCNIPYMGDEVKEEDETFIEELINNYDGKVHGEEEMIPGSVLISDAVFLELVDALNQYSDEEEEGHNDTSDGKQDDSKEDLPVTRKRKRHAIEGNKKSSKKQFPNDMIFSAIASMFPENGVPDDMKERYRELTEMSDPNALPPQCTPNIDGPNAKSVQREQSLHSFHTLFCRRCFKYDCFLHPFHATPNVYKRKNKEIKIEPEPCGTDCFLLLEGAKEYAMLHNPRSKCSGRRRRRHHIVSASCSNASASAVAETKEGDSDRDTGNDWASSSSEANSRCQTPTKQKASPAPPQLCVVEAPSEPVEWTGAEESLFRVFHGTYFNNFCSIARLLGTKTCKQVFQFAVKESLILKLPTDELMNPSQKKKRKHRLWAAHCRKIQLKKDNSSTQVYNYQPCDHPDRPCDSTCPCIMTQNFCEKFCQCNPDCQNRFPGCRCKTQCNTKQCPCYLAVRECDPDLCLTCGASEHWDCKVVSCKNCSIQRGLKKHLLLAPSDVAGWGTFIKESVQKNEFISEYCGELISQDEADRRGKVYDKYMSSFLFNLNNDFVVDATRKGNKIRFANHSVNPNCYAKVVMVNGDHRIGIFAKRAIQAGEELFLDYRYSQADALKYVGIERETDVL.

Positions 188–231 (DEEEEGHNDTSDGKQDDSKEDLPVTRKRKRHAIEGNKKSSKKQF) are disordered. Residues 194 to 211 (HNDTSDGKQDDSKEDLPV) show a composition bias toward basic and acidic residues. Residue lysine 327 forms a Glycyl lysine isopeptide (Lys-Gly) (interchain with G-Cter in SUMO2) linkage. The segment at 378 to 421 (SAVAETKEGDSDRDTGNDWASSSSEANSRCQTPTKQKASPAPPQ) is disordered. Residues 382 to 393 (ETKEGDSDRDTG) show a composition bias toward basic and acidic residues. Over residues 395–414 (DWASSSSEANSRCQTPTKQK) the composition is skewed to polar residues. A Nuclear localization signal motif is present at residues 491–496 (QKKKRK). The 103-residue stretch at 504–606 (CRKIQLKKDN…CKVVSCKNCS (103 aa)) folds into the CXC domain. The SET domain maps to 613–728 (KHLLLAPSDV…AGEELFLDYR (116 aa)).

The protein belongs to the class V-like SAM-binding methyltransferase superfamily. Histone-lysine methyltransferase family. EZ subfamily. Component of the PRC2/EED-EZH1 complex, which includes EED, EZH1, SUZ12, RBBP4 and AEBP2. The PRC2/EED-EZH1 is less abundant than the PRC2/EED-EZH2 complex, has weak methyltransferase activity and compacts chromatin in the absence of the methyltransferase cofactor S-adenosyl-L-methionine (SAM). Interacts with EZHIP; the interaction blocks EZH1 methyltransferase activity.

The protein localises to the nucleus. The enzyme catalyses L-lysyl(27)-[histone H3] + 3 S-adenosyl-L-methionine = N(6),N(6),N(6)-trimethyl-L-lysyl(27)-[histone H3] + 3 S-adenosyl-L-homocysteine + 3 H(+). In terms of biological role, polycomb group (PcG) protein. Catalytic subunit of the PRC2/EED-EZH1 complex, which methylates 'Lys-27' of histone H3, leading to transcriptional repression of the affected target gene. Able to mono-, di- and trimethylate 'Lys-27' of histone H3 to form H3K27me1, H3K27me2 and H3K27me3, respectively. Required for embryonic stem cell derivation and self-renewal, suggesting that it is involved in safeguarding embryonic stem cell identity. Compared to EZH2-containing complexes, it is less abundant in embryonic stem cells, has weak methyltransferase activity and plays a less critical role in forming H3K27me3, which is required for embryonic stem cell identity and proper differentiation. This chain is Histone-lysine N-methyltransferase EZH1 (EZH1), found in Pongo abelii (Sumatran orangutan).